A 123-amino-acid chain; its full sequence is Small ribosomal subunit protein uS13 (123 aa).

The disordered stretch occupies residues 95–123 (GLPVRGQKTKTNARTRKGPKKAVASKKKK).

The protein belongs to the universal ribosomal protein uS13 family. In terms of assembly, part of the 30S ribosomal subunit. Forms a loose heterodimer with protein S19. Forms two bridges to the 50S subunit in the 70S ribosome.

In terms of biological role, located at the top of the head of the 30S subunit, it contacts several helices of the 16S rRNA. In the 70S ribosome it contacts the 23S rRNA (bridge B1a) and protein L5 of the 50S subunit (bridge B1b), connecting the 2 subunits; these bridges are implicated in subunit movement. Contacts the tRNAs in the A and P-sites. This is Small ribosomal subunit protein uS13 from Clostridium acetobutylicum (strain ATCC 824 / DSM 792 / JCM 1419 / IAM 19013 / LMG 5710 / NBRC 13948 / NRRL B-527 / VKM B-1787 / 2291 / W).